The chain runs to 70 residues: Small ribosomal subunit protein bS21C (70 aa).

The disordered stretch occupies residues 38 to 70 (YEKPTTERKRKKAAAVARLRKQVRRSMPPKKKY). The span at 45–70 (RKRKKAAAVARLRKQVRRSMPPKKKY) shows a compositional bias: basic residues.

The protein belongs to the bacterial ribosomal protein bS21 family.

The sequence is that of Small ribosomal subunit protein bS21C from Burkholderia thailandensis (strain ATCC 700388 / DSM 13276 / CCUG 48851 / CIP 106301 / E264).